Reading from the N-terminus, the 246-residue chain is 1-(5-phosphoribosyl)-5-[(5-phosphoribosylamino)methylideneamino] imidazole-4-carboxamide isomerase (246 aa).

The Proton acceptor role is filled by Asp12. Asp134 serves as the catalytic Proton donor.

This sequence belongs to the HisA/HisF family.

It is found in the cytoplasm. It carries out the reaction 1-(5-phospho-beta-D-ribosyl)-5-[(5-phospho-beta-D-ribosylamino)methylideneamino]imidazole-4-carboxamide = 5-[(5-phospho-1-deoxy-D-ribulos-1-ylimino)methylamino]-1-(5-phospho-beta-D-ribosyl)imidazole-4-carboxamide. Its pathway is amino-acid biosynthesis; L-histidine biosynthesis; L-histidine from 5-phospho-alpha-D-ribose 1-diphosphate: step 4/9. This Haloarcula marismortui (strain ATCC 43049 / DSM 3752 / JCM 8966 / VKM B-1809) (Halobacterium marismortui) protein is 1-(5-phosphoribosyl)-5-[(5-phosphoribosylamino)methylideneamino] imidazole-4-carboxamide isomerase.